The chain runs to 168 residues: uncharacterized protein (168 aa).

The N-terminal stretch at 1 to 21 is a signal peptide; the sequence is MVYEVLAVVSGGLLGFGVTWA.

This is an uncharacterized protein from Archaeoglobus fulgidus (strain ATCC 49558 / DSM 4304 / JCM 9628 / NBRC 100126 / VC-16).